Here is a 505-residue protein sequence, read N- to C-terminus: MSSVQQQPPPPRRVTNVGSLLLTPQENESLFTFLGKKCVTMSSAVVQLYAADRNCMWSKKCSGVACLVKDNPQRSYFLRIFDIKDGKLLWEQELYNNFVYNSPRGYFHTFAGDTCQVALNFANEEEAKKFRKAVTDLLGRRQRKSEKRRDPPNGPNLPMATVDIKNPEITTNRFYGPQVNNISHTKEKKKGKAKKKRLTKADIGTPSNFQHIGHVGWDPNTGFDLNNLDPELKNLFDMCGISEAQLKDRETSKVIYDFIEKTGGVEAVKNELRRQAPPPPPPSRGGPPPPPPPPHNSGPPPPPARGRGAPPPPPSRAPTAAPPPPPPSRPSVAVPPPPPNRMYPPPPPALPSSAPSGPPPPPPSVLGVGPVAPPPPPPPPPPPGPPPPPGLPSDGDHQVPTTAGNKAALLDQIREGAQLKKVEQNSRPVSCSGRDALLDQIRQGIQLKSVADGQESTPPTPAPTSGIVGALMEVMQKRSKAIHSSDEDEDEDDEEDFEDDDEWED.

At Ser-2 the chain carries N-acetylserine. A WH1 domain is found at 34–141 (LGKKCVTMSS…KAVTDLLGRR (108 aa)). 2 disordered regions span residues 138-163 (LGRR…ATVD) and 184-205 (HTKE…DIGT). Residues 186–198 (KEKKKGKAKKKRL) are compositionally biased toward basic residues. The CRIB domain maps to 203–216 (IGTPSNFQHIGHVG). Position 242 is a phosphoserine; by TNK2 (Ser-242). Tyr-256 bears the Phosphotyrosine; by FAK1 and TNK2 mark. The disordered stretch occupies residues 266-406 (EAVKNELRRQ…HQVPTTAGNK (141 aa)). Composition is skewed to pro residues over residues 276–364 (APPP…PPPS) and 371–391 (VAPP…PPGL). Arg-307 is modified (omega-N-methylarginine). WH2 domains are found at residues 405–422 (NKAA…LKKV) and 433–450 (GRDA…LKSV). A disordered region spans residues 476-505 (QKRSKAIHSSDEDEDEDDEEDFEDDDEWED). Ser-484 and Ser-485 each carry phosphoserine. Positions 486–505 (DEDEDEDDEEDFEDDDEWED) are enriched in acidic residues.

As to quaternary structure, binds actin and the Arp2/3 complex. Interacts with CDC42. Interacts with FCHSD1. Interacts with FCHSD2. Binds to SH3 domains of GRB2. Interacts with the C-terminal SH3 domain of DNMBP. Interacts with SNX9. Interacts with the WW domains of PRPF40A/FBP11. Interacts with PTK2/FAK1. Interacts with PACSIN1, PACSIN2 and PACSIN3. Interacts with NOSTRIN. Binds to TNK2. Interacts with SNX33. Interacts with NONO (via second RRM domain); the interaction is direct. Component of a multiprotein complex with NONO and SFPQ; associates with the complex via direct interaction with NONO. In terms of assembly, (Microbial infection) Interacts with E.coli effector protein EspF(U). Identified in a complex containing at least WASL, BAIAP2L1 and E.coli EspF(U). (Microbial infection) Interacts with Shigella flexneri protein IcsA. The interaction with IcsA enhances the affinity of WASL for Arp2/3, thus assembling a tight complex which has maximal activity in actin assembly. Post-translationally, phosphorylation at Ser-242, Tyr-256, Ser-484 and Ser-485 enhances actin polymerization activity.

The protein localises to the cytoplasm. The protein resides in the cytoskeleton. Its subcellular location is the nucleus. Functionally, regulates actin polymerization by stimulating the actin-nucleating activity of the Arp2/3 complex. Involved in various processes, such as mitosis and cytokinesis, via its role in the regulation of actin polymerization. Together with CDC42, involved in the extension and maintenance of the formation of thin, actin-rich surface projections called filopodia. In addition to its role in the cytoplasm, also plays a role in the nucleus by regulating gene transcription, probably by promoting nuclear actin polymerization. Binds to HSF1/HSTF1 and forms a complex on heat shock promoter elements (HSE) that negatively regulates HSP90 expression. Plays a role in dendrite spine morphogenesis. Decreasing levels of DNMBP (using antisense RNA) alters apical junction morphology in cultured enterocytes, junctions curve instead of being nearly linear. This Homo sapiens (Human) protein is Actin nucleation-promoting factor WASL (WASL).